The chain runs to 338 residues: NADPH dehydrogenase (338 aa).

An FMN-binding site is contributed by 23 to 26; sequence SPMC. Tyrosine 28 lines the substrate pocket. Positions 60 and 102 each coordinate FMN. 163 to 166 provides a ligand contact to substrate; the sequence is HGAH. Residues arginine 214 and 306–307 contribute to the FMN site; that span reads AR.

It belongs to the NADH:flavin oxidoreductase/NADH oxidase family. NamA subfamily. Homotetramer. The cofactor is FMN.

The enzyme catalyses A + NADPH + H(+) = AH2 + NADP(+). Its function is as follows. Catalyzes the reduction of the double bond of an array of alpha,beta-unsaturated aldehydes and ketones. It also reduces the nitro group of nitroester and nitroaromatic compounds. It could have a role in detoxification processes. This is NADPH dehydrogenase from Halalkalibacterium halodurans (strain ATCC BAA-125 / DSM 18197 / FERM 7344 / JCM 9153 / C-125) (Bacillus halodurans).